The following is a 397-amino-acid chain: Alpha-lytic protease (397 aa).

An N-terminal signal peptide occupies residues Met1–Ala24. Residues Ala25–Thr199 constitute a propeptide that is removed on maturation. A disulfide bridge links Cys216 with Cys236. Residues His235 and Asp262 each act as charge relay system in the active site. Intrachain disulfides connect Cys300–Cys310 and Cys336–Cys369. Ser342 (charge relay system) is an active-site residue.

Belongs to the peptidase S1 family.

The catalysed reaction is Preferential cleavage: Ala-|-Xaa, Val-|-Xaa in bacterial cell walls, elastin and other proteins.. The sequence is that of Alpha-lytic protease (alpha-LP) from Lysobacter enzymogenes.